Reading from the N-terminus, the 527-residue chain is Putative ABC transporter peptide-binding protein BMEII0859 (527 aa).

The signal sequence occupies residues 1-23 (MRLRNFYSALALSAAVFAGPLYA).

It belongs to the bacterial solute-binding protein 5 family. The complex is composed of two ATP-binding proteins (BMEII0863 and BMEII0864), two transmembrane proteins (BMEII0860 and BMEII0861) and a solute-binding protein (BMEII0859).

Its subcellular location is the periplasm. In terms of biological role, probably part of an ABC transporter complex that could be involved in peptide import. The sequence is that of Putative ABC transporter peptide-binding protein BMEII0859 from Brucella melitensis biotype 1 (strain ATCC 23456 / CCUG 17765 / NCTC 10094 / 16M).